Consider the following 128-residue polypeptide: Protein Wnt-2b-B (128 aa).

Intrachain disulfides connect C3–C16 and C5–C11. S8 carries O-palmitoleoyl serine; by PORCN lipidation. N48 carries N-linked (GlcNAc...) asparagine glycosylation. Intrachain disulfides connect C90–C105 and C127–C128.

Belongs to the Wnt family. Palmitoleoylation is required for efficient binding to frizzled receptors. Depalmitoleoylation leads to Wnt signaling pathway inhibition.

The protein localises to the secreted. It localises to the extracellular space. It is found in the extracellular matrix. Its function is as follows. Ligand for members of the frizzled family of seven transmembrane receptors. Functions in the canonical Wnt/beta-catenin signaling pathway. The polypeptide is Protein Wnt-2b-B (wnt2b-b) (Xenopus laevis (African clawed frog)).